The following is a 282-amino-acid chain: Deoxyribonuclease-1 (282 aa).

Positions 1 to 20 (MARLVLELLAAALLLRVAAT) are cleaved as a signal peptide. Residue N38 is glycosylated (N-linked (GlcNAc...) asparagine). Residue E98 is part of the active site. A disulfide bridge connects residues C121 and C124. Residue H154 is part of the active site. C193 and C229 form a disulfide bridge.

The protein belongs to the DNase I family. Requires Ca(2+) as cofactor. Mg(2+) is required as a cofactor. In terms of processing, N-glycosylated.

It is found in the secreted. Its subcellular location is the zymogen granule. It localises to the nucleus envelope. It catalyses the reaction Endonucleolytic cleavage to 5'-phosphodinucleotide and 5'-phosphooligonucleotide end-products.. In terms of biological role, serum endocuclease secreted into body fluids by a wide variety of exocrine and endocrine organs. Expressed by non-hematopoietic tissues and preferentially cleaves protein-free DNA. Among other functions, seems to be involved in cell death by apoptosis. Binds specifically to G-actin and blocks actin polymerization. This chain is Deoxyribonuclease-1 (DNASE1), found in Gallus gallus (Chicken).